The following is a 376-amino-acid chain: N-acetyldiaminopimelate deacetylase (376 aa).

The active site involves D69. The active-site Proton acceptor is E128.

This sequence belongs to the peptidase M20A family. N-acetyldiaminopimelate deacetylase subfamily.

It carries out the reaction N-acetyl-(2S,6S)-2,6-diaminopimelate + H2O = (2S,6S)-2,6-diaminopimelate + acetate. It functions in the pathway amino-acid biosynthesis; L-lysine biosynthesis via DAP pathway; LL-2,6-diaminopimelate from (S)-tetrahydrodipicolinate (acetylase route): step 3/3. Catalyzes the conversion of N-acetyl-diaminopimelate to diaminopimelate and acetate. The chain is N-acetyldiaminopimelate deacetylase from Bacillus thuringiensis subsp. konkukian (strain 97-27).